The following is a 279-amino-acid chain: Probable endonuclease 4 (279 aa).

Residues His66, His106, Glu142, Asp176, His179, His213, Asp226, His228, and Glu258 each coordinate Zn(2+).

It belongs to the AP endonuclease 2 family. Zn(2+) is required as a cofactor.

It carries out the reaction Endonucleolytic cleavage to 5'-phosphooligonucleotide end-products.. Endonuclease IV plays a role in DNA repair. It cleaves phosphodiester bonds at apurinic or apyrimidinic (AP) sites, generating a 3'-hydroxyl group and a 5'-terminal sugar phosphate. The polypeptide is Probable endonuclease 4 (Photobacterium profundum (strain SS9)).